The primary structure comprises 370 residues: G-protein coupled receptor homolog K2 (370 aa).

Residues 1-61 (MTSPTNSTML…CTFLEDTKYH (61 aa)) are Extracellular-facing. Residues asparagine 6 and asparagine 51 are each glycosylated (N-linked (GlcNAc...) asparagine; by host). Residues 62 to 82 (IIVIHIILFLLGSIGNIFVVS) traverse the membrane as a helical segment. The Cytoplasmic portion of the chain corresponds to 83-94 (LIAFKRNKSITD). Residues 95 to 115 (IYILNLSMSDCIFVFQIPFIV) traverse the membrane as a helical segment. At 116 to 131 (YSKLDQWIFGNILCKI) the chain is on the extracellular side. A helical transmembrane segment spans residues 132 to 152 (MSVLYYVGFFSNMFIITLMSI). Residues 153 to 171 (DRYFAIVHPIKRQPYRTKR) are Cytoplasmic-facing. A helical transmembrane segment spans residues 172–192 (IGILMCCSAWLLSLILSSPVS). Residues 193–223 (KLYENIPHMSKDIYQCTLTNENDSIIAFIKR) are Extracellular-facing. Residues 224 to 244 (LMQIEITILGFLIPIIIFVYC) form a helical membrane-spanning segment. The Cytoplasmic portion of the chain corresponds to 245-265 (YYRIFTTVVRLRNRRKYKSIK). The chain crosses the membrane as a helical span at residues 266-286 (IVLMIVVCSLICWIPLYIVLM). Residues 287 to 300 (IATIVSLYTSNIFR) are Extracellular-facing. The chain crosses the membrane as a helical span at residues 301 to 321 (HLCLYLNLAYAITFSETISLA). At 322–370 (RCCINPIIYTLIGEHVRSRISSICSCIYRDNRIRKKLFSRKSSSSSNII) the chain is on the cytoplasmic side.

The protein belongs to the G-protein coupled receptor 1 family.

Its subcellular location is the host cell membrane. Functionally, putative chemokine receptor. The protein is G-protein coupled receptor homolog K2 of Sus scrofa (Pig).